Consider the following 258-residue polypeptide: Cruciform cutting endonuclease 1, mitochondrial (258 aa).

An SAP domain is found at 1-35; sequence MATVKLSFLQHICKLTGLSRSGRKDELLRRIVDSP. 2 residues coordinate Mg(2+): D46 and D230.

As to quaternary structure, homodimer.

It is found in the mitochondrion. The catalysed reaction is Endonucleolytic cleavage at a junction such as a reciprocal single-stranded crossover between two homologous DNA duplexes (Holliday junction).. Its function is as follows. Capable of resolving Holliday junctions. Specific for 4-way junctions. Seems to be important for the maintenance of mitochondrial DNA. Cleaves fixed junctions at the point of strand exchange. Cleaves after 5'-CT-3' and 5'-TT-3' sequences. The sequence is that of Cruciform cutting endonuclease 1, mitochondrial (cce1) from Schizosaccharomyces pombe (strain 972 / ATCC 24843) (Fission yeast).